A 124-amino-acid polypeptide reads, in one-letter code: Small ribosomal subunit protein uS12 (124 aa).

Asp-89 bears the 3-methylthioaspartic acid mark.

This sequence belongs to the universal ribosomal protein uS12 family. Part of the 30S ribosomal subunit. Contacts proteins S8 and S17. May interact with IF1 in the 30S initiation complex.

Its function is as follows. With S4 and S5 plays an important role in translational accuracy. Functionally, interacts with and stabilizes bases of the 16S rRNA that are involved in tRNA selection in the A site and with the mRNA backbone. Located at the interface of the 30S and 50S subunits, it traverses the body of the 30S subunit contacting proteins on the other side and probably holding the rRNA structure together. The combined cluster of proteins S8, S12 and S17 appears to hold together the shoulder and platform of the 30S subunit. The chain is Small ribosomal subunit protein uS12 from Shewanella baltica (strain OS223).